The chain runs to 515 residues: Na(+)/H(+) antiporter NhaB (515 aa).

11 consecutive transmembrane segments (helical) span residues 23–43 (LAII…NPFV), 45–65 (GWLL…CYPL), 96–116 (VVLL…LLLF), 136–156 (CLAS…AVVI), 204–224 (LMMH…VGEP), 245–265 (APIT…VEHF), 305–325 (ALIG…VGLI), 349–369 (FEEA…VAVI), 393–413 (LFYL…VGTV), 449–469 (ATPN…SPLI), and 480–500 (ALPY…FLLI).

It belongs to the NhaB Na(+)/H(+) (TC 2.A.34) antiporter family.

It is found in the cell inner membrane. It carries out the reaction 2 Na(+)(in) + 3 H(+)(out) = 2 Na(+)(out) + 3 H(+)(in). Na(+)/H(+) antiporter that extrudes sodium in exchange for external protons. The polypeptide is Na(+)/H(+) antiporter NhaB (Photorhabdus laumondii subsp. laumondii (strain DSM 15139 / CIP 105565 / TT01) (Photorhabdus luminescens subsp. laumondii)).